The following is a 67-amino-acid chain: Phycobilisome 7.8 kDa linker polypeptide, allophycocyanin-associated, core (67 aa).

A CpcD-like domain is found at 1 to 56 (MRVFKVTACVPSQTRIRTQRELQNTYFTKLVPYDNWFREQQRIMKMGGKIVKVELA).

It belongs to the phycobilisome linker protein family.

It is found in the cellular thylakoid membrane. Rod linker protein, associated with allophycocyanin. Linker polypeptides determine the state of aggregation and the location of the disk-shaped phycobiliprotein units within the phycobilisome and modulate their spectroscopic properties in order to mediate a directed and optimal energy transfer. The sequence is that of Phycobilisome 7.8 kDa linker polypeptide, allophycocyanin-associated, core (apcC) from Arthrospira platensis (Spirulina platensis).